Consider the following 491-residue polypeptide: MQMKKLLPILIGLSLSGFSTLSQAENLMQVYQQARLSNPELRKSAADRDAAFEKINEARSPLLPQLGLGADYTYSNGYRDANGINSNETSASLQLTQTLFDMSKWRGLTLQEKAAGIQDVTYQTDQQTLILNTANAYFKVLNAIDVLSYTQAQKEAIYRQLDQTTQRFNVGLVAITDVQNARAQYDTVLANEVTVRNNLDNAVEELRQVTGNYYPELASLNVEHFKTDKPKAVNALLKEAENRNLSLLQARLSQDLAREQIRQAQDGHLPTLNLTPSTGISDTSYSGSKTNAAQYDDSNMGQNKIGLNFSLPLYQGGMVNSQVKQAQYNFVGASEQLESAHRSVVQTVRSSFNNINASISSINAYKQAVVSAQSSLDAMEAGYSVGTRTIVDVLDATTTLYDAKQQLANARYTYLINQLNIKYALGTLNEQDLLALNSTLGKPIPTSPESVAPETPDQDCAADGYNAHSAAPAVQPTAARANSNNGNPFRH.

The signal sequence occupies residues 1-24; the sequence is MQMKKLLPILIGLSLSGFSTLSQA. 2 disordered regions span residues 267–287 and 445–491; these read GHLP…SYSG and PTSP…PFRH. The segment covering 272-287 has biased composition (polar residues); the sequence is LNLTPSTGISDTSYSG. Low complexity predominate over residues 467-481; that stretch reads AHSAAPAVQPTAARA. Over residues 482–491 the composition is skewed to polar residues; the sequence is NSNNGNPFRH.

The protein belongs to the outer membrane factor (OMF) (TC 1.B.17) family. In terms of assembly, homotrimer. Part of tripartite efflux systems, which are composed of an inner membrane transporter, a periplasmic membrane fusion protein, and an outer membrane component, TolC. The complexes form a large protein conduit and can translocate molecules across both the inner and outer membranes.

It is found in the cell outer membrane. Functionally, outer membrane channel, which is required for the function of several efflux systems. Required for virulence. In Salmonella enteritidis, this protein is Outer membrane protein TolC (tolC).